The primary structure comprises 431 residues: Glutamate-1-semialdehyde 2,1-aminomutase (431 aa).

The residue at position 264 (Lys264) is an N6-(pyridoxal phosphate)lysine.

It belongs to the class-III pyridoxal-phosphate-dependent aminotransferase family. HemL subfamily. As to quaternary structure, homodimer. It depends on pyridoxal 5'-phosphate as a cofactor.

The protein resides in the cytoplasm. The catalysed reaction is (S)-4-amino-5-oxopentanoate = 5-aminolevulinate. It functions in the pathway porphyrin-containing compound metabolism; protoporphyrin-IX biosynthesis; 5-aminolevulinate from L-glutamyl-tRNA(Glu): step 2/2. The sequence is that of Glutamate-1-semialdehyde 2,1-aminomutase from Clostridium beijerinckii (strain ATCC 51743 / NCIMB 8052) (Clostridium acetobutylicum).